We begin with the raw amino-acid sequence, 416 residues long: MDLTNMGKAAKGAAFELATASTAQKNQALAIIADELEANSAAILAANAKDIELGREAGLTDALLDRLLLNEERLTGIANDVRNVISLNDPVGSEIDSKVLENGMSLSRRRVPLGVVGVIYEARPNVTIDIAALCLKTGNASILRGGKETFFSNMELVKVIQSALAKANLPAASVQYIEKPDRELVSQLLKLDDYVDMIIPRGGAGLHKMCKENSTIPVIIGGFGISHIFVDESADLEKSLNVVENSKVQRPSACNSLDTLLVHEKVAAKFLPMIVERMSDKVTFVAEPKAKALMAQATQIRDAVEGDFDTEWLSYTLGVKVVADVKEAIDHMRVHNASHSDAIMTNSLINSELFINSVGSAAVYVNAATRFTDGAQFGLGAEVAVSTQKLHARGPMGLEELTSYKWVGKANYLARS.

This sequence belongs to the gamma-glutamyl phosphate reductase family.

It is found in the cytoplasm. It catalyses the reaction L-glutamate 5-semialdehyde + phosphate + NADP(+) = L-glutamyl 5-phosphate + NADPH + H(+). Its pathway is amino-acid biosynthesis; L-proline biosynthesis; L-glutamate 5-semialdehyde from L-glutamate: step 2/2. Catalyzes the NADPH-dependent reduction of L-glutamate 5-phosphate into L-glutamate 5-semialdehyde and phosphate. The product spontaneously undergoes cyclization to form 1-pyrroline-5-carboxylate. This Vibrio parahaemolyticus serotype O3:K6 (strain RIMD 2210633) protein is Gamma-glutamyl phosphate reductase.